A 473-amino-acid polypeptide reads, in one-letter code: Rop guanine nucleotide exchange factor 3 (473 aa).

The segment at 1–28 is disordered; the sequence is MENLSNPDENDDHQSPRSIDQNDQSAVE. The span at 16–28 shows a compositional bias: polar residues; the sequence is PRSIDQNDQSAVE. The PRONE domain occupies 95–473; the sequence is LVVQEISEPE…YVDKTMRGSE (379 aa).

Its function is as follows. Guanine-nucleotide exchange factor (GEF) that acts as an activator of Rop (Rho of plants) GTPases by promoting the exchange of GDP for GTP. The sequence is that of Rop guanine nucleotide exchange factor 3 (ROPGEF3) from Arabidopsis thaliana (Mouse-ear cress).